The primary structure comprises 710 residues: Prolyl endopeptidase (710 aa).

Methionine 1 carries the post-translational modification N-acetylmethionine. An N6-acetyllysine modification is found at lysine 157. Catalysis depends on charge relay system residues serine 554, aspartate 641, and histidine 680.

It belongs to the peptidase S9A family. In terms of tissue distribution, expressed in all tissues tested: uterus, kidney, heart, lung, small intestine, smooth muscle, liver, spleen, thymus, adrenal, pituitary and whole brain.

It is found in the cytoplasm. The enzyme catalyses Hydrolysis of Pro-|-Xaa &gt;&gt; Ala-|-Xaa in oligopeptides.. With respect to regulation, inhibited by DFP, Z-Pro-prolinal and poststatin, but not by PMSF, SBTI, EDTA, leupeptin, E-64 and pepstatin. Its function is as follows. Cleaves peptide bonds on the C-terminal side of prolyl residues within peptides that are up to approximately 30 amino acids long. Has high activity on the succinyl- (suc-) peptide-4-methylcoumaryl-7-amide (MCA) substrates suc-Gly-Pro-Leu-Gly-Pro-MCA, suc-Gly-Pro-MCA and suc-Ala-Ala-Ala-MCA. This chain is Prolyl endopeptidase, found in Rattus norvegicus (Rat).